The sequence spans 279 residues: Acetyl-coenzyme A carboxylase carboxyl transferase subunit beta (279 aa).

A CoA carboxyltransferase N-terminal domain is found at 23 to 279 (LWWKCEECGA…LTTLLSLMKL (257 aa)). Cys-27, Cys-30, Cys-46, and Cys-49 together coordinate Zn(2+). The segment at 27–49 (CEECGAALHKKQMEASDHTCPQC) adopts a C4-type zinc-finger fold.

Belongs to the AccD/PCCB family. As to quaternary structure, acetyl-CoA carboxylase is a heterohexamer composed of biotin carboxyl carrier protein (AccB), biotin carboxylase (AccC) and two subunits each of ACCase subunit alpha (AccA) and ACCase subunit beta (AccD). It depends on Zn(2+) as a cofactor.

It localises to the cytoplasm. It carries out the reaction N(6)-carboxybiotinyl-L-lysyl-[protein] + acetyl-CoA = N(6)-biotinyl-L-lysyl-[protein] + malonyl-CoA. It functions in the pathway lipid metabolism; malonyl-CoA biosynthesis; malonyl-CoA from acetyl-CoA: step 1/1. In terms of biological role, component of the acetyl coenzyme A carboxylase (ACC) complex. Biotin carboxylase (BC) catalyzes the carboxylation of biotin on its carrier protein (BCCP) and then the CO(2) group is transferred by the transcarboxylase to acetyl-CoA to form malonyl-CoA. The polypeptide is Acetyl-coenzyme A carboxylase carboxyl transferase subunit beta (Chlorobium chlorochromatii (strain CaD3)).